The primary structure comprises 550 residues: MAETIRPISKIELRFKLADIKKPSSQIIVYCNSGDSKRFDLIGATERIDNKSEPFFNTTINIDYYFESVQKLYLLAINHNLKTLDFTKIDQLDVVGEFTPTIGDLISRDGKRLIGDIKDKDKITGKIEITAEEIYETGHNIILQLKGTKLDKKDLFSSDPYFKIYKSSPSGNSIVFESSVIKNNINPIFDPIVIRLQELNGGCMFRELTFEFWDHNDIVDDELIGSFRTNTDEILSGIIKEFPIINQKLKSKKSNYEHSGIINFIDSRILYKPTIQDFINGNGNGNGNGDGNCLIDLMVAIDCTESNGDQKLETSLHYNVKPHQNQYIRSLLALESQLLNNFGVKLEKRVEVFGFGAVINKHPNHNFRFHYIIDDRPNTLKAGISGVIELYDKAIPKIQFTSPTKISSIIEDATRYSLQDFHSTQLKYSILLILIDSDITDYESTVDEIVEASKAPLSIIFIGVGEYSFQNIPQLDGEKNGNIRLIGRFDRKQIRDNVHFISFKEFSINQIDFQNEILRKLPNQLTEFMEFKNYLPNGLSYTQTEIKKIK.

C2 domains follow at residues 1–115 (MAET…RLIG) and 123–246 (ITGK…PIIN). The VWFA domain maps to 296–521 (DLMVAIDCTE…DFQNEILRKL (226 aa)).

It belongs to the copine family.

The polypeptide is Copine-F (cpnF) (Dictyostelium discoideum (Social amoeba)).